The following is a 148-amino-acid chain: Urease accessory protein UreE (148 aa).

The protein belongs to the UreE family.

It localises to the cytoplasm. Involved in urease metallocenter assembly. Binds nickel. Probably functions as a nickel donor during metallocenter assembly. This Nostoc punctiforme (strain ATCC 29133 / PCC 73102) protein is Urease accessory protein UreE.